The primary structure comprises 345 residues: Acetylserotonin O-methyltransferase (345 aa).

Residues Y147, W164, D210, 235–237 (GDF), and R252 each bind S-adenosyl-L-methionine. The active-site Proton donor/acceptor is the H255. Substrate-binding residues include D256, N302, and Q306.

Belongs to the class I-like SAM-binding methyltransferase superfamily. Cation-independent O-methyltransferase family. As to quaternary structure, homodimer. Expressed in the pineal gland (at protein level). Not detectable in retina, nor in liver.

The enzyme catalyses N-acetylserotonin + S-adenosyl-L-methionine = melatonin + S-adenosyl-L-homocysteine + H(+). Its pathway is aromatic compound metabolism; melatonin biosynthesis; melatonin from serotonin: step 1/2. Catalyzes the transfer of a methyl group onto N-acetylserotonin, producing melatonin (N-acetyl-5-methoxytryptamine). The polypeptide is Acetylserotonin O-methyltransferase (ASMT) (Bos taurus (Bovine)).